The sequence spans 433 residues: 5-methylthioadenosine/S-adenosylhomocysteine deaminase (433 aa).

The Zn(2+) site is built by H67 and H69. Residues E96, R148, and H187 each contribute to the substrate site. H214 serves as a coordination point for Zn(2+). Substrate contacts are provided by E217 and D302. D302 contributes to the Zn(2+) binding site.

It belongs to the metallo-dependent hydrolases superfamily. MTA/SAH deaminase family. Zn(2+) serves as cofactor.

The catalysed reaction is S-adenosyl-L-homocysteine + H2O + H(+) = S-inosyl-L-homocysteine + NH4(+). It carries out the reaction S-methyl-5'-thioadenosine + H2O + H(+) = S-methyl-5'-thioinosine + NH4(+). Functionally, catalyzes the deamination of 5-methylthioadenosine and S-adenosyl-L-homocysteine into 5-methylthioinosine and S-inosyl-L-homocysteine, respectively. Is also able to deaminate adenosine. The protein is 5-methylthioadenosine/S-adenosylhomocysteine deaminase of Carboxydothermus hydrogenoformans (strain ATCC BAA-161 / DSM 6008 / Z-2901).